The primary structure comprises 93 residues: Microcin N immunity protein (93 aa).

3 helical membrane-spanning segments follow: residues 3-23, 36-56, and 68-88; these read FLNF…FIVW, LSII…NYKI, and LFCF…YFIL.

The protein belongs to the MceB microcin immunity protein family.

It is found in the cell inner membrane. Probably able to protect the producing cell against microcin N (microcin 24). The sequence is that of Microcin N immunity protein from Escherichia coli.